Here is a 297-residue protein sequence, read N- to C-terminus: Elongation factor Ts (297 aa).

Residues 82–85 form an involved in Mg(2+) ion dislocation from EF-Tu region; it reads TDFV. Residues 223–265 are compositionally biased toward low complexity; the sequence is AQTAAAAETAPPEVSEPEPAAAVTAEEPTPEPVAAAEQPAEPV. Positions 223–297 are disordered; it reads AQTAAAAETA…GKSRSNKKKK (75 aa). The segment covering 286 to 297 has biased composition (basic residues); that stretch reads SGGKSRSNKKKK.

The protein belongs to the EF-Ts family.

It localises to the cytoplasm. Its function is as follows. Associates with the EF-Tu.GDP complex and induces the exchange of GDP to GTP. It remains bound to the aminoacyl-tRNA.EF-Tu.GTP complex up to the GTP hydrolysis stage on the ribosome. This chain is Elongation factor Ts, found in Thermosynechococcus vestitus (strain NIES-2133 / IAM M-273 / BP-1).